We begin with the raw amino-acid sequence, 352 residues long: Uricase (352 aa).

Residues 1–32 are disordered; the sequence is MFATPLRQPAAANHQTPKNSAGMDEHGKPYQY. A compositionally biased stretch (basic and acidic residues) spans 23–32; that stretch reads MDEHGKPYQY. Residues K41 and T86 each act as charge relay system in the active site. Urate contacts are provided by T86, D87, F214, R231, V279, Q280, and N306. H308 (charge relay system) is an active-site residue. The Microbody targeting signal signature appears at 350–352; it reads SHL.

This sequence belongs to the uricase family. Malpighian tubules.

The protein resides in the peroxisome. It carries out the reaction urate + O2 + H2O = 5-hydroxyisourate + H2O2. Its pathway is purine metabolism; urate degradation; (S)-allantoin from urate: step 1/3. Its activity is regulated as follows. Repressed by 20-hydroxyecdysone. Its function is as follows. Catalyzes the oxidation of uric acid to 5-hydroxyisourate, which is further processed to form (S)-allantoin. The chain is Uricase (Uro) from Drosophila melanogaster (Fruit fly).